Here is a 276-residue protein sequence, read N- to C-terminus: NADH-cytochrome b5 reductase 2 (276 aa).

The FAD-binding FR-type domain maps to 15-127 (EAKYPLPLIE…RGPTGRLFYN (113 aa)). An N6-acetyllysine modification is found at Lys17. Position 18 is a phosphotyrosine (Tyr18). FAD-binding positions include 107 to 137 (ENMK…IKAN) and 146 to 181 (LVHH…RMSL).

Belongs to the flavoprotein pyridine nucleotide cytochrome reductase family. FAD serves as cofactor.

The enzyme catalyses 2 Fe(III)-[cytochrome b5] + NADH = 2 Fe(II)-[cytochrome b5] + NAD(+) + H(+). In terms of biological role, NADH-cytochrome b5 reductases are involved in desaturation and elongation of fatty acids, cholesterol biosynthesis, drug metabolism, and, in erythrocyte, methemoglobin reduction. Responsible for NADH-dependent lucigenin chemiluminescence in spermatozoa by reducing both lucigenin and 2-[4-iodophenyl]-3-[4-nitrophenyl]-5-[2,4-disulfophenyl]-2H tetrazolium monosodium salt (WST-1). In Mus musculus (Mouse), this protein is NADH-cytochrome b5 reductase 2 (Cyb5r2).